The following is a 293-amino-acid chain: NAD kinase (293 aa).

Aspartate 72 acts as the Proton acceptor in catalysis. NAD(+)-binding positions include 72–73 (DG), 146–147 (ND), arginine 157, arginine 174, aspartate 176, 187–192 (TAYALS), and glutamine 247.

Belongs to the NAD kinase family. A divalent metal cation is required as a cofactor.

The protein resides in the cytoplasm. The catalysed reaction is NAD(+) + ATP = ADP + NADP(+) + H(+). Its function is as follows. Involved in the regulation of the intracellular balance of NAD and NADP, and is a key enzyme in the biosynthesis of NADP. Catalyzes specifically the phosphorylation on 2'-hydroxyl of the adenosine moiety of NAD to yield NADP. The chain is NAD kinase from Teredinibacter turnerae (strain ATCC 39867 / T7901).